Consider the following 347-residue polypeptide: Photosystem II assembly protein Ycf48 (347 aa).

The first 38 residues, 1-38 (MFAKQIDIHWQKMKGIKFLHWLLGTVLLWVSLSTPALA), serve as a signal peptide directing secretion. Residues 202-226 (RGSFYSTWEPGQTAWEPHNRTTSRR) carry the Arg-rich patch motif.

This sequence belongs to the Ycf48 family. As to quaternary structure, interacts with the D1 protein (crystallized with PsbA1 or PsbA3), via the latter's C-terminal prepropeptide, may interact with parts of the mature D1 protein as well.

It localises to the cellular thylakoid lumen. Functionally, a factor required for optimal assembly of photosystem II (PSII), acting in the early stages of PSII assembly. Also plays a role in replacement of photodamaged D1 (psbA). Assists YidC in synthesis of chlorophyll-binding proteins. In Thermosynechococcus vestitus (strain NIES-2133 / IAM M-273 / BP-1), this protein is Photosystem II assembly protein Ycf48.